A 452-amino-acid chain; its full sequence is 3-phosphoshikimate 1-carboxyvinyltransferase (452 aa).

Low complexity predominate over residues 1–17; the sequence is MSHAAAAKPATARKSQA. Residues 1 to 26 are disordered; the sequence is MSHAAAAKPATARKSQALSGTARVPG. 3 residues coordinate 3-phosphoshikimate: Lys28, Ser29, and Arg33. Residue Lys28 participates in phosphoenolpyruvate binding. Residues Gly100 and Arg128 each coordinate phosphoenolpyruvate. 3-phosphoshikimate is bound by residues Ser174, Gln176, Asp327, and Lys354. Residue Gln176 participates in phosphoenolpyruvate binding. Residue Asp327 is the Proton acceptor of the active site. Arg358 and Arg409 together coordinate phosphoenolpyruvate.

The protein belongs to the EPSP synthase family. Monomer.

Its subcellular location is the cytoplasm. The catalysed reaction is 3-phosphoshikimate + phosphoenolpyruvate = 5-O-(1-carboxyvinyl)-3-phosphoshikimate + phosphate. It participates in metabolic intermediate biosynthesis; chorismate biosynthesis; chorismate from D-erythrose 4-phosphate and phosphoenolpyruvate: step 6/7. Functionally, catalyzes the transfer of the enolpyruvyl moiety of phosphoenolpyruvate (PEP) to the 5-hydroxyl of shikimate-3-phosphate (S3P) to produce enolpyruvyl shikimate-3-phosphate and inorganic phosphate. In Mesorhizobium japonicum (strain LMG 29417 / CECT 9101 / MAFF 303099) (Mesorhizobium loti (strain MAFF 303099)), this protein is 3-phosphoshikimate 1-carboxyvinyltransferase.